Consider the following 399-residue polypeptide: Dual-specificity RNA methyltransferase RlmN (399 aa).

Glu121 serves as the catalytic Proton acceptor. The Radical SAM core domain maps to 127-376 (DVDRGTLCVS…VRTPRGRDIL (250 aa)). Cys134 and Cys379 are disulfide-bonded. [4Fe-4S] cluster-binding residues include Cys141, Cys145, and Cys148. Residues 205-206 (GE), Ser237, 259-261 (SLH), and Asn336 contribute to the S-adenosyl-L-methionine site. Cys379 acts as the S-methylcysteine intermediate in catalysis.

It belongs to the radical SAM superfamily. RlmN family. The cofactor is [4Fe-4S] cluster.

It is found in the cytoplasm. The catalysed reaction is adenosine(2503) in 23S rRNA + 2 reduced [2Fe-2S]-[ferredoxin] + 2 S-adenosyl-L-methionine = 2-methyladenosine(2503) in 23S rRNA + 5'-deoxyadenosine + L-methionine + 2 oxidized [2Fe-2S]-[ferredoxin] + S-adenosyl-L-homocysteine. It catalyses the reaction adenosine(37) in tRNA + 2 reduced [2Fe-2S]-[ferredoxin] + 2 S-adenosyl-L-methionine = 2-methyladenosine(37) in tRNA + 5'-deoxyadenosine + L-methionine + 2 oxidized [2Fe-2S]-[ferredoxin] + S-adenosyl-L-homocysteine. Specifically methylates position 2 of adenine 2503 in 23S rRNA and position 2 of adenine 37 in tRNAs. m2A2503 modification seems to play a crucial role in the proofreading step occurring at the peptidyl transferase center and thus would serve to optimize ribosomal fidelity. The protein is Dual-specificity RNA methyltransferase RlmN of Methylocella silvestris (strain DSM 15510 / CIP 108128 / LMG 27833 / NCIMB 13906 / BL2).